The following is a 195-amino-acid chain: MTINTNNLTITISAASKKQYPENDWPEIALAGRSNVGKSSFINTLLNRKNFARTSGQPGKTQLLNFYNIDDQLHFVDVPGYGYARVSKKEREKWGKMIEEYLTTRENLKAVVSLVDIRHEPSEDDLMMYEFLKYYHIPVILVATKADKVPRGKWNKHESIIKKAMKFDSTDDFIIFSSTDKTGFEEAWEAILRYL.

The region spanning 24 to 195 is the EngB-type G domain; the sequence is DWPEIALAGR…EAWEAILRYL (172 aa). GTP is bound by residues 32–39, 59–63, 77–80, 144–147, and 176–178; these read GRSNVGKS, GKTQL, DVPG, TKAD, and FSS. Positions 39 and 61 each coordinate Mg(2+).

The protein belongs to the TRAFAC class TrmE-Era-EngA-EngB-Septin-like GTPase superfamily. EngB GTPase family. Mg(2+) serves as cofactor.

Necessary for normal cell division and for the maintenance of normal septation. In Lactococcus lactis subsp. lactis (strain IL1403) (Streptococcus lactis), this protein is Probable GTP-binding protein EngB.